A 191-amino-acid polypeptide reads, in one-letter code: ATP-dependent dethiobiotin synthetase BioD 2 (191 aa).

13–18 lines the ATP pocket; that stretch reads DVGKTI. Thr-17 lines the Mg(2+) pocket. Lys-38 is an active-site residue. Thr-42 is a binding site for substrate. ATP is bound by residues Asp-50 and 115–118; that span reads EGAG. Mg(2+)-binding residues include Asp-50 and Glu-115.

This sequence belongs to the dethiobiotin synthetase family. In terms of assembly, homodimer. It depends on Mg(2+) as a cofactor.

Its subcellular location is the cytoplasm. The enzyme catalyses (7R,8S)-7,8-diammoniononanoate + CO2 + ATP = (4R,5S)-dethiobiotin + ADP + phosphate + 3 H(+). It participates in cofactor biosynthesis; biotin biosynthesis; biotin from 7,8-diaminononanoate: step 1/2. Catalyzes a mechanistically unusual reaction, the ATP-dependent insertion of CO2 between the N7 and N8 nitrogen atoms of 7,8-diaminopelargonic acid (DAPA, also called 7,8-diammoniononanoate) to form a ureido ring. This chain is ATP-dependent dethiobiotin synthetase BioD 2, found in Haemophilus influenzae (strain ATCC 51907 / DSM 11121 / KW20 / Rd).